Consider the following 243-residue polypeptide: Proteasome subunit beta 1 (243 aa).

The span at 1–14 (MRAPQHNSDFSRTV) shows a compositional bias: polar residues. Positions 1-34 (MRAPQHNSDFSRTVDQLADDPNPYEPEIGSMPQN) are disordered. The propeptide at 1 to 48 (MRAPQHNSDFSRTVDQLADDPNPYEPEIGSMPQNDLTRADLDNVNKTG) is removed in mature form; by autocatalysis. Thr-49 acts as the Nucleophile in catalysis.

It belongs to the peptidase T1B family. As to quaternary structure, the 20S proteasome core is composed of 14 alpha and 14 beta subunits that assemble into four stacked heptameric rings, resulting in a barrel-shaped structure. The two inner rings, each composed of seven catalytic beta subunits, are sandwiched by two outer rings, each composed of seven alpha subunits. The catalytic chamber with the active sites is on the inside of the barrel. Has a gated structure, the ends of the cylinder being occluded by the N-termini of the alpha-subunits. Is capped at one or both ends by the proteasome regulatory ATPase, PAN.

The protein resides in the cytoplasm. The catalysed reaction is Cleavage of peptide bonds with very broad specificity.. With respect to regulation, the formation of the proteasomal ATPase PAN-20S proteasome complex, via the docking of the C-termini of PAN into the intersubunit pockets in the alpha-rings, triggers opening of the gate for substrate entry. Interconversion between the open-gate and close-gate conformations leads to a dynamic regulation of the 20S proteasome proteolysis activity. Component of the proteasome core, a large protease complex with broad specificity involved in protein degradation. The protein is Proteasome subunit beta 1 of Haloterrigena turkmenica (strain ATCC 51198 / DSM 5511 / JCM 9101 / NCIMB 13204 / VKM B-1734 / 4k) (Halococcus turkmenicus).